A 248-amino-acid polypeptide reads, in one-letter code: MQKSEGSGGTQLKNRATGNYDQRTSSSTQLKHRNAVQGSKSSLSTSSPESARKLHPRPSDKLNPKTINPFGEQSRVPSAFAAIYSKGGIPCRLVHGSVKHRLQWECPPESLSFDPLLITLAEGLRETKHPYTFVSKEGFRELLLVKGAPEKAIPLLPRLIPVLKAALVHSDDEVFERGLNALVQLSVVVGPSLNDHLKHLLTSLSKRLMDKKFKEPITSALQKLEQHGGSGSLSIIKSKIPTYCSICC.

At Met-1 the chain carries N-acetylmethionine. The span at 1 to 29 (MQKSEGSGGTQLKNRATGNYDQRTSSSTQ) shows a compositional bias: polar residues. Residues 1-71 (MQKSEGSGGT…LNPKTINPFG (71 aa)) are disordered. The span at 39–49 (SKSSLSTSSPE) shows a compositional bias: low complexity. Ser-47 is subject to Phosphoserine.

This Homo sapiens (Human) protein is PACRG-like protein (PACRGL).